The chain runs to 436 residues: Antilisterial bacteriocin subtilosin biosynthesis protein AlbD (436 aa).

10 helical membrane passes run 27–47 (IAAG…QAGI), 51–71 (VLGK…MVFL), 112–132 (TLFF…SGAQ), 134–154 (LFWL…GVML), 166–186 (FLLH…MPAV), 187–207 (TIPL…PVFL), 240–260 (AMLL…FQMM), 270–290 (IYIV…LYSI), 315–335 (FYSG…GFIS), and 395–415 (ATLA…LIIV).

It is found in the cell membrane. In terms of biological role, involved in the production of the bacteriocin subtilosin. Required for immunity to subtilosin. The chain is Antilisterial bacteriocin subtilosin biosynthesis protein AlbD (albD) from Bacillus subtilis.